The chain runs to 85 residues: Translational regulator CsrA (85 aa).

Belongs to the CsrA/RsmA family. In terms of assembly, homodimer; the beta-strands of each monomer intercalate to form a hydrophobic core, while the alpha-helices form wings that extend away from the core.

The protein resides in the cytoplasm. Its function is as follows. A translational regulator that binds mRNA to regulate translation initiation and/or mRNA stability. Usually binds in the 5'-UTR at or near the Shine-Dalgarno sequence preventing ribosome-binding, thus repressing translation. Its main target seems to be the major flagellin gene, while its function is anatagonized by FliW. In Leifsonia xyli subsp. xyli (strain CTCB07), this protein is Translational regulator CsrA.